We begin with the raw amino-acid sequence, 517 residues long: Ovoinhibitor (517 aa).

Kazal-like domains lie at 67-132 (FGIE…ECRP), 133-197 (KHVT…ECKL), 198-263 (EIGS…KCRQ), 264-329 (EIPE…RCKE), 330-394 (RSTP…RCRE), 395-460 (EVPE…RCEE), and 461-517 (DITK…MAAC). Asn72 is a glycosylation site (N-linked (GlcNAc...) asparagine). Cystine bridges form between Cys73–Cys112, Cys90–Cys109, Cys98–Cys130, Cys139–Cys177, Cys155–Cys174, Cys163–Cys195, Cys204–Cys243, Cys221–Cys240, Cys229–Cys261, Cys270–Cys309, Cys287–Cys306, Cys295–Cys327, Cys336–Cys374, Cys352–Cys371, Cys360–Cys392, Cys401–Cys440, Cys418–Cys437, Cys426–Cys458, Cys467–Cys499, Cys477–Cys496, and Cys485–Cys517. Asn186 carries N-linked (GlcNAc...) asparagine glycosylation. An N-linked (GlcNAc...) asparagine glycan is attached at Asn506.

Post-translationally, glycosylated. As to expression, expressed in oviduct (at protein level). Expressed in egg white (at protein level). Expressed in egg yolk plasma of non-fertilized eggs (at protein level). Expressed in the magnum of the oviduct (at protein level). Expressed in oviduct. Expressed in liver. Expressed in the cortico-medullary border region of the bursa of Fabricius by the bursal secretory dendritic-like cells. Highly expressed in the magnum of the oviduct, and at a lower level in uterus. Weakly expressed in white isthmus and very weakly in infundibulum. Not expressed in duodenum and kidney.

It is found in the secreted. In terms of biological role, serine protease inhibitor involved in antimicrobial egg defense preventing contamination of table eggs (non-fertilized eggs) and protecting the chick embryo (fertilized eggs). Inhibits trypsin, chymotrypsin, elastase, subtilisin and a proteinase of fungus Aspergillus oryzae. Inhibits calcium-activated potassium channels KCNMA1 (bovine) and slo (Drosophila). Has antibacterial activity against B.thuringiensis LMSA 3.06.004, but not against S.aureus CIP 103 811, P.aeruginosa PAO1, B.cereus ATCC6464 or B.subtilis ATCC 6633. In Gallus gallus (Chicken), this protein is Ovoinhibitor.